Reading from the N-terminus, the 66-residue chain is DNA gyrase inhibitor YacG (66 aa).

Zn(2+) contacts are provided by C9, C12, C28, and C32. Positions 45-66 (HKIAGSEGSEDELYSGDLEPRH) are disordered.

This sequence belongs to the DNA gyrase inhibitor YacG family. As to quaternary structure, interacts with GyrB. Zn(2+) is required as a cofactor.

Inhibits all the catalytic activities of DNA gyrase by preventing its interaction with DNA. Acts by binding directly to the C-terminal domain of GyrB, which probably disrupts DNA binding by the gyrase. The chain is DNA gyrase inhibitor YacG from Pseudomonas putida (strain ATCC 700007 / DSM 6899 / JCM 31910 / BCRC 17059 / LMG 24140 / F1).